We begin with the raw amino-acid sequence, 260 residues long: MRLALGLSYRGGAYRGWQSQPDGLTVQDRVEEALARFADRPVRTVCAGRTDAGVHALNQVVHLDTEIEREPFSWVRGTNRYLPPDIAVQWCRPVDAAFHARNSARGRRYAYLLLESPVRPAIEAGAVGWVFRPLDATPMREAAAHLIGEHDFSAFRSAECQAASPVKNLRRIEIVRCGAYWRFEFEASAFLHHMVRNLMGCLLAVGQGVRAPQWLAEVLAAGDRRRAAPTFAPDGLYFLGPQYDANLDLPERTPAFDWLP.

The active-site Nucleophile is Asp51. Position 109 (Tyr109) interacts with substrate.

The protein belongs to the tRNA pseudouridine synthase TruA family. As to quaternary structure, homodimer.

It catalyses the reaction uridine(38/39/40) in tRNA = pseudouridine(38/39/40) in tRNA. Its function is as follows. Formation of pseudouridine at positions 38, 39 and 40 in the anticodon stem and loop of transfer RNAs. The protein is tRNA pseudouridine synthase A of Methylibium petroleiphilum (strain ATCC BAA-1232 / LMG 22953 / PM1).